The sequence spans 190 residues: Signal peptidase complex subunit 3 (190 aa).

Over methionine 1–glutamine 9 the chain is Cytoplasmic. A helical; Signal-anchor for type II membrane protein transmembrane segment spans residues tyrosine 10–leucine 32. At glutamine 33 to lysine 190 the chain is on the lumenal side.

The protein belongs to the SPCS3 family. In terms of assembly, component of the signal peptidase complex (SPC) composed of a catalytic subunit SEC11 and three accessory subunits SPC1, SPC2 and SPC3. The complex induces a local thinning of the ER membrane which is used to measure the length of the signal peptide (SP) h-region of protein substrates. This ensures the selectivity of the complex towards h-regions shorter than 18-20 amino acids. SPC associates with the translocon complex.

The protein resides in the endoplasmic reticulum membrane. Its function is as follows. Essential component of the signal peptidase complex (SPC) which catalyzes the cleavage of N-terminal signal sequences from nascent proteins as they are translocated into the lumen of the endoplasmic reticulum. Essential for the SPC catalytic activity, possibly by stabilizing and positioning the active center of the complex close to the lumenal surface. Essential for viability. This Debaryomyces hansenii (strain ATCC 36239 / CBS 767 / BCRC 21394 / JCM 1990 / NBRC 0083 / IGC 2968) (Yeast) protein is Signal peptidase complex subunit 3 (SPC3).